The sequence spans 290 residues: Diaminopimelate epimerase (290 aa).

Residues asparagine 14 and asparagine 67 each coordinate substrate. Cysteine 76 acts as the Proton donor in catalysis. Substrate-binding positions include 77-78 (GN), asparagine 166, asparagine 199, and 217-218 (ER). Cysteine 226 functions as the Proton acceptor in the catalytic mechanism. 227 to 228 (GT) serves as a coordination point for substrate.

It belongs to the diaminopimelate epimerase family. Homodimer.

The protein localises to the cytoplasm. It catalyses the reaction (2S,6S)-2,6-diaminopimelate = meso-2,6-diaminopimelate. It participates in amino-acid biosynthesis; L-lysine biosynthesis via DAP pathway; DL-2,6-diaminopimelate from LL-2,6-diaminopimelate: step 1/1. Its function is as follows. Catalyzes the stereoinversion of LL-2,6-diaminopimelate (L,L-DAP) to meso-diaminopimelate (meso-DAP), a precursor of L-lysine and an essential component of the bacterial peptidoglycan. The protein is Diaminopimelate epimerase of Geobacillus thermodenitrificans (strain NG80-2).